Reading from the N-terminus, the 263-residue chain is Indole-3-glycerol phosphate synthase (263 aa).

Belongs to the TrpC family.

It catalyses the reaction 1-(2-carboxyphenylamino)-1-deoxy-D-ribulose 5-phosphate + H(+) = (1S,2R)-1-C-(indol-3-yl)glycerol 3-phosphate + CO2 + H2O. The protein operates within amino-acid biosynthesis; L-tryptophan biosynthesis; L-tryptophan from chorismate: step 4/5. The chain is Indole-3-glycerol phosphate synthase from Sulfurimonas denitrificans (strain ATCC 33889 / DSM 1251) (Thiomicrospira denitrificans (strain ATCC 33889 / DSM 1251)).